A 202-amino-acid chain; its full sequence is MNFLRKIVKSCKDEEDQKPALVSAPPDDDDLWLPPPESVPLTEISGKKNMRNFCINGEVKICSPNGYSFKILRHILKSFDGIYSGNRRMIGLVKVVIGLALSGAPVPEGMNWVYKIRRTLVFQWAESRGPLDGEELEYSQEITWDDDSEFIGLQIRVSARQCHIQGRVWCINMNSRACQLWSDMSLKTQQSDEDKNTSLLLE.

A PPXY motif motif is present at residues 35–38 (PPES). The interval 115 to 151 (KIRRTLVFQWAESRGPLDGEELEYSQEITWDDDSEFI) is essential for glycoprotein binding.

It belongs to the lyssavirus matrix protein family. In terms of assembly, homomultimer. Interacts with nucleoprotein and with the cytoplasmic domain of glycoprotein.

The protein resides in the virion membrane. The protein localises to the host endomembrane system. Its function is as follows. Plays a major role in assembly and budding of virion. Completely covers the ribonucleoprotein coil and keep it in condensed bullet-shaped form. Inhibits viral transcription and stimulates replication. Plays a major role in early induction of TRAIL-mediated apoptosis in infected neurons. The sequence is that of Matrix protein (M) from Myotis mystacinus (Whiskered bat).